The following is a 410-amino-acid chain: MRVNGYRGAKVGAVDTTSPPEVPASARLQRLAPMLLVVSILARLAWTYLVPNGANFVDLHVYVGGADALDGPGALYDYVYADQTPDFPLPFTYPPFAAIVFYPLHLLPFGVVAFIWQIGIIAALYGVVRVSQRLMGLQSQRRVAMLWTALGIWTEPLRSTFDYGQVNVVLVLAVLCAVSTTRWWLSGLLVGLAAGIKLTPAVAGLYFLGARRWAAVACSAAVFFATVGVSWLVVGAQARRYFTELLGDADRIGPIGTSFNQSWRGGISRILGHDAGFGPLVLIGIGITAVLALLAWRAIGGAQDRLGGILVVSLFGLVLSPISWTHHWVWLIPLMMWLLHGPLSALRGARILGWGWLALTLLGVPWLLSFAQPTIWEIGRPWYLAWAGLVYIVATLATLGWIAFSRKGSG.

10 helical membrane-spanning segments follow: residues 31–51, 96–116, 160–180, 188–208, 214–234, 276–296, 306–326, 328–348, 351–371, and 384–404; these read LAPM…YLVP, FAAI…AFIW, TFDY…AVST, LLVG…LYFL, AAVA…WLVV, GFGP…LLAW, LGGI…SWTH, WVWL…ALRG, ILGW…LSFA, and LAWA…WIAF.

Belongs to the glycosyltransferase 87 family.

The protein localises to the cell membrane. It functions in the pathway phospholipid metabolism; phosphatidylinositol metabolism. In terms of biological role, catalyzes the alpha-1,2 addition of a mannose residue from polyprenol-phosphate-mannose (PPM) to a monoacyl phosphatidylinositol tetramannoside (AcPIM4) to generate a monoacyl phosphatidylinositol pentamannoside (AcPIM5). In Mycolicibacterium smegmatis (strain ATCC 700084 / mc(2)155) (Mycobacterium smegmatis), this protein is Polyprenol-phosphate-mannose-dependent alpha-(1-2)-phosphatidylinositol pentamannoside mannosyltransferase.